Reading from the N-terminus, the 143-residue chain is Nucleoside diphosphate kinase (143 aa).

The ATP site is built by Lys-11, Phe-59, Arg-87, Thr-93, Arg-104, and Asn-114. The Pros-phosphohistidine intermediate role is filled by His-117.

The protein belongs to the NDK family. Homotetramer. Requires Mg(2+) as cofactor.

It is found in the cytoplasm. It catalyses the reaction a 2'-deoxyribonucleoside 5'-diphosphate + ATP = a 2'-deoxyribonucleoside 5'-triphosphate + ADP. The catalysed reaction is a ribonucleoside 5'-diphosphate + ATP = a ribonucleoside 5'-triphosphate + ADP. Its function is as follows. Major role in the synthesis of nucleoside triphosphates other than ATP. The ATP gamma phosphate is transferred to the NDP beta phosphate via a ping-pong mechanism, using a phosphorylated active-site intermediate. This is Nucleoside diphosphate kinase from Shewanella oneidensis (strain ATCC 700550 / JCM 31522 / CIP 106686 / LMG 19005 / NCIMB 14063 / MR-1).